The chain runs to 243 residues: DNA repair protein RecO (243 aa).

Belongs to the RecO family.

Its function is as follows. Involved in DNA repair and RecF pathway recombination. This is DNA repair protein RecO from Chlamydia trachomatis serovar L2 (strain ATCC VR-902B / DSM 19102 / 434/Bu).